A 1339-amino-acid polypeptide reads, in one-letter code: DNA polymerase alpha catalytic subunit (1339 aa).

Disordered stretches follow at residues 1–90 and 177–203; these read MSGG…SMSD and NVER…GYRN. Basic and acidic residues predominate over residues 27–36; the sequence is DQWRSLREEV. A compositionally biased stretch (polar residues) spans 79–89; it reads PKQQTLAQSMS. Zn(2+) contacts are provided by Cys1179, Cys1182, Cys1213, Cys1216, Cys1233, Cys1243, Cys1271, and Cys1286. The CysA-type zinc-finger motif lies at 1179–1216; the sequence is CTHCRLMTPINPHTRVMEVLADQERQRDRFDLYVCVSC. The CysB motif signature appears at 1243-1271; the sequence is CGSAAAVKAVRTQFTYYRALFDVPHAPGC.

Belongs to the DNA polymerase type-B family.

The protein resides in the nucleus. It carries out the reaction DNA(n) + a 2'-deoxyribonucleoside 5'-triphosphate = DNA(n+1) + diphosphate. Functionally, polymerase alpha in a complex with DNA primase is a replicative polymerase. The sequence is that of DNA polymerase alpha catalytic subunit from Leishmania donovani.